The following is an 887-amino-acid chain: MAPPSPREHQSAPATSATKPDAEMVLPGFPDADSFVKFALGSVVAVTKASGGLPQFGDEYDFYRSFPAFQAFCETQGDRLLQCMSRVMQYHGCRSNIKDRSKVTELEDKFDLLVDTNDVILERVGMLLDEASGVNKHQQPVLPAGLQVPKTIVSSWNRKAGEYGKKAKSETFRLLHAKNIVRPQLRFREKIDNSNTPFLPKIFVKPNARKPLPLALSKERRERPQDRPEDLDVPPALADFIHQQRTQQVEQDMFAHPYQYELDHFTPPQSVLQRPKPQLYRAVGETPCHLVSSLDELVELNEKLLGCQEFAVDLEHHSYRSFLGLTCLMQISTRTEDFIVDTLELRSDMYILNESLTDPAIVKVFHGADSDIEWLQKDFGLYVVNMFDTHQAARLLNLARHSLDHLLRLYCGVESNKQYQLADWRIRPLPEEMLSYARDDTHYLLYIYDRMRLELWERGNHQPVQLQVVWQRSRDICLKKFVKPIFTDESYLELYRKQKKHLNSQQLTAFQLLFAWRDKTARREDESYGYVLPNHMMLKIAEELPKEPQGIIACCNPVPPLVRQQINEMHLLIQQAREMPLLKSENAAGVRKSGPLPSAERLENDLFGPHDCSHAPPDNYQNTSTDGTLPLQKQPSLFTEGKEETSVDAGCLLATAVITLFSEPNTEEGGKTPLTVAQKKAQNIMQSFENPFRMFLPSLEHKAHISQAAKFDPSSKIYEISNRWKLASQVQVQKEPKEATKKKVAEQTAAREEAKEEAAAGVLEQAIPVRQQAALENATKKRERATSDLRTIEQKQEKKRLKSSKKAKDPDPPGKDFSPYDYSQSDFRAFAGDSKSKPSSQFDPNKLAPSGKKGVGAKKCKQSVGNKSMSFAVGKSDRGFRHNWPKR.

Residues 1–10 (MAPPSPREHQ) show a composition bias toward basic and acidic residues. The segment at 1–23 (MAPPSPREHQSAPATSATKPDAE) is disordered. Residue lysine 19 forms a Glycyl lysine isopeptide (Lys-Gly) (interchain with G-Cter in SUMO2) linkage. One can recognise a 3'-5' exonuclease domain in the interval 289-455 (HLVSSLDELV…YIYDRMRLEL (167 aa)). Positions 313, 315, 371, and 440 each coordinate Mg(2+). The 81-residue stretch at 503–583 (NSQQLTAFQL…QQAREMPLLK (81 aa)) folds into the HRDC domain. A Glycyl lysine isopeptide (Lys-Gly) (interchain with G-Cter in SUMO1); alternate cross-link involves residue lysine 583. A Glycyl lysine isopeptide (Lys-Gly) (interchain with G-Cter in SUMO2); alternate cross-link involves residue lysine 583. Residue lysine 710 forms a Glycyl lysine isopeptide (Lys-Gly) (interchain with G-Cter in SUMO2) linkage. 2 disordered regions span residues 734 to 757 (KEPKEATKKKVAEQTAAREEAKEE) and 777 to 887 (NATK…WPKR). Residues 778-796 (ATKKRERATSDLRTIEQKQ) are compositionally biased toward basic and acidic residues. Position 823 is a phosphoserine (serine 823). Glycyl lysine isopeptide (Lys-Gly) (interchain with G-Cter in SUMO2) cross-links involve residues lysine 835, lysine 861, and lysine 875.

It belongs to the exosome component 10/RRP6 family. Component of the RNA exosome complex. The catalytically inactive RNA exosome core complex (Exo-9) associates with the catalytic subunit EXOSC10/RRP6 (via its N-terminus). Exo-9 may associate with DIS3 to form the nucleolar exosome complex, or DIS3L to form the cytoplasmic exosome complex. The RNA exosome complex interacts with cofactors C1D/RRP47, MPHOSPH6/MPP6 and MTREX/MTR4. Interacts with MTREX; the interaction with MTREX mediates the association of MTREX with nuclear RNA exosomes. Part of the small subunit (SSU) processome, composed of more than 70 proteins and the RNA chaperone small nucleolar RNA (snoRNA) U3. Interacts with ALYREF/THOC4. Interacts with DHX36; this interaction occurs in a RNase-insensitive manner. Interacts with NRDE2. Interacts (via C-terminus) with USP36 (via C-terminus); the interaction is facilitated by the association with RNA and promotes sumoylation of EXOSC10. The cofactor is Mg(2+). Sumoylated by USP36; sumoylation does not significantly affect EXOSC10 nucleolar localization and association with core exosome and USP36, but regulates the nucleolar RNA exosome activity in rRNA processing by promoting binding of EXOSC10 to pre-rRNAs. Effects of sumoylation on EXOSC10 levels vary between different studies. Sumoylation of EXOSC10 is required for the modulation of EXOSC10 effects on cellular protein translation and cell proliferation. Sumoylation is promoted by mild hypothermia. Expressed in ovary (at protein level). Expressed in testis (at protein level). Expressed in lung (at protein level).

It localises to the cytoplasm. Its subcellular location is the nucleus. The protein resides in the nucleolus. It is found in the nucleoplasm. Functionally, catalytic component of the RNA exosome complex which has 3'-&gt;5' exoribonuclease activity and participates in a multitude of cellular RNA processing and degradation events. In the nucleus, the RNA exosome complex is involved in proper maturation of stable RNA species such as rRNA, snRNA and snoRNA, in the elimination of RNA processing by-products and non-coding 'pervasive' transcripts, such as antisense RNA species and promoter-upstream transcripts (PROMPTs), and of mRNAs with processing defects, thereby limiting or excluding their export to the cytoplasm. Part of the small subunit (SSU) processome, first precursor of the small eukaryotic ribosomal subunit. During the assembly of the SSU processome in the nucleolus, many ribosome biogenesis factors, an RNA chaperone and ribosomal proteins associate with the nascent pre-rRNA and work in concert to generate RNA folding, modifications, rearrangements and cleavage as well as targeted degradation of pre-ribosomal RNA by the RNA exosome. The RNA exosome may be involved in Ig class switch recombination (CSR) and/or Ig variable region somatic hypermutation (SHM) by targeting AICDA deamination activity to transcribed dsDNA substrates. In the cytoplasm, the RNA exosome complex is involved in general mRNA turnover and specifically degrades inherently unstable mRNAs containing AU-rich elements (AREs) within their 3' untranslated regions, and in RNA surveillance pathways, preventing translation of aberrant mRNAs. It seems to be involved in degradation of histone mRNA. EXOSC10 is required for nucleolar localization of C1D and probably mediates the association of MTREX, C1D and MPHOSPH6 with the RNA exosome involved in the maturation of 5.8S rRNA. Plays a role in the recruitment of replication protein A complex (RPA) and RAD51 to DNA double-strand breaks caused by irradiation, contributing to DNA repair by homologous recombination. Regulates levels of damage-induced RNAs in order to prevent DNA-RNA hybrid formation at DNA double-strand breaks and limit DNA end resection after damage. Plays a role in oocyte development, maturation and survival. Required for normal testis development and mitotic division of spermatogonia. Plays a role in proper embryo development. Required for global protein translation. Required for cell proliferation. The polypeptide is Exosome complex component 10 (Exosc10) (Mus musculus (Mouse)).